Here is a 619-residue protein sequence, read N- to C-terminus: DNA mismatch repair protein MutL (619 aa).

This sequence belongs to the DNA mismatch repair MutL/HexB family.

In terms of biological role, this protein is involved in the repair of mismatches in DNA. It is required for dam-dependent methyl-directed DNA mismatch repair. May act as a 'molecular matchmaker', a protein that promotes the formation of a stable complex between two or more DNA-binding proteins in an ATP-dependent manner without itself being part of a final effector complex. This chain is DNA mismatch repair protein MutL, found in Myxococcus xanthus (strain DK1622).